The chain runs to 549 residues: CTP synthase (549 aa).

Residues 1 to 266 are amidoligase domain; it reads MSAKYIFVTG…DKLALRYLHL (266 aa). Ser-14 lines the CTP pocket. Residue Ser-14 participates in UTP binding. Residues 15–20 and Asp-72 contribute to the ATP site; that span reads SLGKGL. Mg(2+)-binding residues include Asp-72 and Glu-140. CTP is bound by residues 147–149, 187–192, and Lys-223; these read DIE and KTKPTQ. UTP is bound by residues 187-192 and Lys-223; that span reads KTKPTQ. ATP is bound at residue 239 to 241; it reads KDV. The region spanning 291–533 is the Glutamine amidotransferase type-1 domain; it reads SIGIVGKYVE…VKAAYQNHKP (243 aa). Residue Gly-353 coordinates L-glutamine. Cys-380 serves as the catalytic Nucleophile; for glutamine hydrolysis. Residues 381–384, Glu-404, and Arg-461 each bind L-glutamine; that span reads LGMQ. Residues His-506 and Glu-508 contribute to the active site.

Belongs to the CTP synthase family. Homotetramer.

The catalysed reaction is UTP + L-glutamine + ATP + H2O = CTP + L-glutamate + ADP + phosphate + 2 H(+). It carries out the reaction L-glutamine + H2O = L-glutamate + NH4(+). It catalyses the reaction UTP + NH4(+) + ATP = CTP + ADP + phosphate + 2 H(+). Its pathway is pyrimidine metabolism; CTP biosynthesis via de novo pathway; CTP from UDP: step 2/2. Its activity is regulated as follows. Allosterically activated by GTP, when glutamine is the substrate; GTP has no effect on the reaction when ammonia is the substrate. The allosteric effector GTP functions by stabilizing the protein conformation that binds the tetrahedral intermediate(s) formed during glutamine hydrolysis. Inhibited by the product CTP, via allosteric rather than competitive inhibition. Functionally, catalyzes the ATP-dependent amination of UTP to CTP with either L-glutamine or ammonia as the source of nitrogen. Regulates intracellular CTP levels through interactions with the four ribonucleotide triphosphates. The polypeptide is CTP synthase (Acidobacterium capsulatum (strain ATCC 51196 / DSM 11244 / BCRC 80197 / JCM 7670 / NBRC 15755 / NCIMB 13165 / 161)).